The chain runs to 355 residues: MQIQSQETTAEGAERIEVVPETLDDLWHLSYVIEPGDLVSGDTTRRIQRNDDNLRDKGGEREPMWIQIEVTDVEFAKFANRLRVGGEIVDCSREDQLGFHHTLNVEEHTELTVEKHLKPDQADRLEEAVEATENPDVAIATVEEGEAHVHTVAQYGTEERATITSTTGKGEYARPRKELFDELASVLKRQDVDAYILAGPGFTKQDALDHFQDEIPDIAEQITVVDTSAVGDRGVHEVLKRGAVEDVQQQTRIAEEADYIDELMARIGSGSEVAYGPEEVAKAADYGAIETLLVLDERLRLERAGEGDWDIDVDQIIETTEQKGGDVTVFSAEFAPGQQLSNLGGVAALLRYRLD.

It belongs to the eukaryotic release factor 1 family. Pelota subfamily. In terms of assembly, monomer. The cofactor is a divalent metal cation.

It localises to the cytoplasm. In terms of biological role, may function in recognizing stalled ribosomes, interact with stem-loop structures in stalled mRNA molecules, and effect endonucleolytic cleavage of the mRNA. May play a role in the release non-functional ribosomes and degradation of damaged mRNAs. Has endoribonuclease activity. The chain is Protein pelota homolog from Haloarcula marismortui (strain ATCC 43049 / DSM 3752 / JCM 8966 / VKM B-1809) (Halobacterium marismortui).